Here is a 158-residue protein sequence, read N- to C-terminus: Large ribosomal subunit protein uL23 (158 aa).

Positions 1-43 are disordered; sequence MPPKSSTKAEPKASSAKTQVAKAKSAKKAVVKGTSSKTQRRIR. Over residues 12–23 the composition is skewed to low complexity; that stretch reads KASSAKTQVAKA.

This sequence belongs to the universal ribosomal protein uL23 family.

This protein binds to a specific region on the 26S rRNA. The protein is Large ribosomal subunit protein uL23 of Puccinia graminis (Black stem rust fungus).